The primary structure comprises 166 residues: Spiderine-1b (166 aa).

The N-terminal stretch at 1–18 is a signal peptide; that stretch reads MKFALVLLGICAFYLVNA. A propeptide spans 19–58 (removed in mature form); the sequence is TGDLETELEASELQELQEALDLIGETSLESLEAEELEEAR. The linear cationic cytotoxin domain stretch occupies residues 59–99; it reads KFKWGKLFSAAKKLYKKGKKLSKNKNFKKALKFGKQLAKNL. The region spanning 113 to 166 is the Oxytoxin-type inhibitor cystine knot (ICK) domain; it reads NNKCWAIGTTCSDDCDCCPEHHCHCPAGKWLPGLFRCTCQVTESDKVNKCPPAE. 5 disulfide bridges follow: Cys116/Cys130, Cys123/Cys135, Cys127/Cys162, Cys129/Cys151, and Cys137/Cys149.

This sequence belongs to the spiderine family. Cationic/spiderine subfamily. In terms of tissue distribution, expressed by the venom gland.

It localises to the secreted. Functionally, has antimicrobial, insecticidal, cytolytic and cytotoxic activity. This Oxyopes takobius (Lynx spider) protein is Spiderine-1b.